Reading from the N-terminus, the 511-residue chain is GATOR complex protein NPRL3 (511 aa).

The interval 37 to 58 (KPATKAPSKDPQPSSSNPGQCV) is disordered.

The protein belongs to the NPR3 family. In terms of assembly, probably part of the GATOR complex.

It is found in the lysosome membrane. As a component of the GATOR complex may function in the amino acid-sensing branch of the TORC1 signaling pathway. This Caenorhabditis elegans protein is GATOR complex protein NPRL3 (nprl-3).